The sequence spans 1958 residues: MLQDESSRSLPRSALIRRRLSLFLQSHALMYSFLWSESAKKSLLNEVFSALLGYDHTLWNTLLPERPTIDASFLLRRAQGHSEGDEYRHGTCESKCGHIFRKGEVFYRCKTCSVDSNSALCVKCFRATSHKDHETSFTVSAGSGGCCDCGNAAAWIGDVSCKIHSHEEDATISNDMIDEIPEKLENSIQTTIDCVLDFVLDVFSCSPENLKKMPTLESILQDEKTSRLSENKYGDIDDSCNMYSLVLWNDEKHSFKQFYEQITTALELPNNVFGKKMANIINDIGRACIVTETNIKELLKIGQKLAQINLAVSIRSMRDIFREESCAVLLEWLADIAGSSICGKRNYFSSVICKELVRPWNCGLHNSDLTFRLSLRSLALPEIVAIDSPDIFLNEDHINSSGPSDTSSHMLETDESSIHSRHWYPSNSLPDVLSYASRVRFDYFFLYDLKLWKSLRYKLQELYLGYFITQPGFKEIMGARIAISYRRLAELFLLLDREPEHSVIFFSMQIFTVADVAKLLVTEYDFLTTINATLYTFFTYKKLNTPNYVDQHAMIRTDSAAFHSRRYIHIFHHIQFMLSIPCVAEIVREDLKFLKQYADFFNLFQGMCPYTRAVSQHVEWENDSWMYVLNVSLQVAKLCRHVGNVFMELNTNKLANAINYLISLILYPKARNESWTNTESLTTGITVDERGNSKLIEYDIALQPVSFHHPLHWLLVYLLSFYVERDNYKLLWTQLDLLAVTDHPLRVCAWLSQMRAKLWIRNGTTLRDQAHHYRNLSFHEYTFDLDVLLLQLTLTYGDPDAILPSFISRFQLEDQMYGRFFVPHKHYDVSQVTIMMEEFLLLLISIVCNTAVLDHWDITRRIEYGIAHILCFRPLPYSEITKRTCEHLLEHKQFESTLKKVATFRNAEGINDSGSFTLKDEYFDYVDPFNIHYSRNQREEAENILRRRYSKQHSKHLESVVYEEYHPILHSNITIPILQSDSFVGILWHTIVYAYIYPYDQGKLEGLVNTALHACLLVLMSEKGSEPIFSKKICENRFPVVEGLQEYCNSPDVTLFSVLCQMKNHRNFVYVKEKISLIMKILKSEVPLLYEPVYAETLSISSSKIVQSLSDAEQQEQHLAKVRMAKERQARIMEQFRMQQNKFLENHALFEASDCEMDEADEFSVTSSVSTKLFLDPPIDTCLLCQEELKDKRPYGTLVFVLRSSVLRLFPADDANYVSEVLDIPDSLDHEIQERPFGLAGKRKKVLDSTEAYDYDNYYYEKKGNELHQLKDSFNGFPPDQLDRGLHATGCGHFMHIDCFKNHIATVTLATRANPYRNHPHNLSMKEFLCPLCKALCNTIFPILWRPKEEINFQEAGVLTAPLKNWLVSKTFSFNKDLNQQLLDIETSPSEHTQSYNLNLLDVLQHTLRDSLKDIYTLNTGADNSSDNVEENADNLFQSSVLDHVHFKSVVNNEVPADERLAISDDIFELYRRLDDVIDLNSSLYSDDFIPVNGKLHNVVKLFSYSLCQVEASTRGHIKCSSIPADIWVHNLGKNQQVFLRILSESIKTYTLLCAHDSQKRIGGSIQEFEFISFCQQKRIFGRLLPSLDSPVTKSITDDRVEPLLVKDTFREFAEASVSGLLSCDESFHYLTQLYYTADIVRNLWILLSQRNSLLKCMESVEFEAFDYEQLKGFEHLVIQIWKSLRVDGAGLINFDCCTEDDLNNPHLLFTLYKLLERFSLIFLRKCALLWYCRYGVSFETQPNLNFQNSELSRLQTKMHIPGVIELSNHLCLTASSTEWSLIKHWCNFFTETGPLCDFPRAYYPGIYELVSLPYELDKVFELLLARRCSKCLTEPMEPAICLFCGKLLCFQSHCCSFNGIGECNLHMQQCASDIGIFLIVKKCAILYLNPPVGSFSVAPFLDAYGETDLGLRRGRSQYLSQKRYDETVRTMWLNGSIPSYIARQLDANPDTGGWETL.

The segment at 94–166 (SKCGHIFRKG…GDVSCKIHSH (73 aa)) adopts a UBR-type zinc-finger fold. Residues 1182–1334 (CLLCQEELKD…MKEFLCPLCK (153 aa)) form an RING-type; atypical zinc finger.

Belongs to the E3 ubiquitin-protein ligase UBR1-like family.

The catalysed reaction is S-ubiquitinyl-[E2 ubiquitin-conjugating enzyme]-L-cysteine + [acceptor protein]-L-lysine = [E2 ubiquitin-conjugating enzyme]-L-cysteine + N(6)-ubiquitinyl-[acceptor protein]-L-lysine.. It participates in protein modification; protein ubiquitination. Ubiquitin ligase protein which is a component of the N-end rule pathway. Recognizes and binds to proteins bearing specific N-terminal residues that are destabilizing according to the N-end rule, leading to their ubiquitination and subsequent degradation. In Schizosaccharomyces pombe (strain 972 / ATCC 24843) (Fission yeast), this protein is E3 ubiquitin-protein ligase ubr1 (ubr1).